The primary structure comprises 564 residues: Lamassu protein LmuB (564 aa).

Component of antiviral defense system Lamassu type II, composed of LmuA and LmuB. Expression of Lamassu type II in B.subtilis (strain BEST7003) confers resistance to phage SpBeta. May be an ATPase. This chain is Lamassu protein LmuB, found in Bacillus cereus (strain VD014).